The chain runs to 363 residues: Pituitary-specific positive transcription factor 1 (363 aa).

A 9aaTAD motif is present at residues 5-13 (AFASSDNFV). The POU-specific domain maps to 195-269 (MDSPEIRELE…ILSKWLEEAE (75 aa)). The segment at residues 285–344 (KRKRRTTISISAKEALERHFGEQSKPSSQEIMRMAEGLNLEKEVVRVWFCNRRQREKRVK) is a DNA-binding region (homeobox).

It belongs to the POU transcription factor family. Class-1 subfamily. As to expression, pituitary gland.

The protein resides in the nucleus. Transcription factor that activates growth hormone and prolactin genes. Specifically binds to the consensus sequence 5'-TAAAT-3'. This is Pituitary-specific positive transcription factor 1 (POU1F1) from Gallus gallus (Chicken).